The primary structure comprises 1456 residues: Ig-like and fibronectin type-III domain-containing protein C27B7.7 (1456 aa).

Positions 1 to 16 (MISLSLVLLLLFGVRC) are cleaved as a signal peptide. Fibronectin type-III domains are found at residues 24-128 (NDDS…SINT) and 132-227 (IPKA…TNST). N-linked (GlcNAc...) asparagine glycosylation is found at Asn-64, Asn-146, Asn-164, Asn-198, and Asn-225. Residues 236-322 (PDEEYTADPQ…DAGDSSKEVN (87 aa)) enclose the Ig-like 1 domain. Cys-254 and Cys-308 are disulfide-bonded. Positions 328 to 426 (PGSPPSEITL…VAMERDTQPI (99 aa)) constitute a Fibronectin type-III 3 domain. N-linked (GlcNAc...) asparagine glycosylation is found at Asn-471, Asn-497, and Asn-517. Fibronectin type-III domains are found at residues 531–631 (APTQ…TLNG), 636–736 (PPDN…TAYS), and 737–846 (EVPI…WFRT). N-linked (GlcNAc...) asparagine glycosylation is found at Asn-658, Asn-691, and Asn-692. Residues 841-948 (PRWFRTGHGK…GSSSASVEIR (108 aa)) enclose the Ig-like 2 domain. Cys-877 and Cys-932 are oxidised to a cystine. N-linked (GlcNAc...) asparagine glycans are attached at residues Asn-893, Asn-898, Asn-969, Asn-1091, Asn-1120, Asn-1133, Asn-1151, Asn-1207, Asn-1268, Asn-1277, Asn-1298, Asn-1350, Asn-1357, and Asn-1382. Residues 955–1050 (PPENIILTAY…SCISDVLYET (96 aa)) form the Fibronectin type-III 7 domain. 3 Fibronectin type-III domains span residues 1148–1234 (APTN…TPNG), 1236–1343 (PKTA…ISFD), and 1347–1438 (VIDN…SSPS). Residues 1419–1456 (LGRESPPSEEIDLEFISSPSPTPIISGSRRKVIKEPPL) are disordered. The segment covering 1434–1445 (ISSPSPTPIISG) has biased composition (low complexity).

The protein resides in the secreted. The sequence is that of Ig-like and fibronectin type-III domain-containing protein C27B7.7 from Caenorhabditis elegans.